Here is a 590-residue protein sequence, read N- to C-terminus: Arginine--tRNA ligase (590 aa).

Residues 138–148 (ANPTGPLHIGH) carry the 'HIGH' region motif.

It belongs to the class-I aminoacyl-tRNA synthetase family. In terms of assembly, monomer.

It localises to the cytoplasm. It carries out the reaction tRNA(Arg) + L-arginine + ATP = L-arginyl-tRNA(Arg) + AMP + diphosphate. This Orientia tsutsugamushi (strain Boryong) (Rickettsia tsutsugamushi) protein is Arginine--tRNA ligase.